The chain runs to 456 residues: tRNA(Ile)-lysidine synthase (456 aa).

Residue 28–33 coordinates ATP; that stretch reads SGGSDS.

This sequence belongs to the tRNA(Ile)-lysidine synthase family.

Its subcellular location is the cytoplasm. The enzyme catalyses cytidine(34) in tRNA(Ile2) + L-lysine + ATP = lysidine(34) in tRNA(Ile2) + AMP + diphosphate + H(+). Its function is as follows. Ligates lysine onto the cytidine present at position 34 of the AUA codon-specific tRNA(Ile) that contains the anticodon CAU, in an ATP-dependent manner. Cytidine is converted to lysidine, thus changing the amino acid specificity of the tRNA from methionine to isoleucine. This chain is tRNA(Ile)-lysidine synthase, found in Brucella anthropi (strain ATCC 49188 / DSM 6882 / CCUG 24695 / JCM 21032 / LMG 3331 / NBRC 15819 / NCTC 12168 / Alc 37) (Ochrobactrum anthropi).